Here is a 189-residue protein sequence, read N- to C-terminus: GTP cyclohydrolase 1 (189 aa).

The Zn(2+) site is built by Cys78, His81, and Cys150.

The protein belongs to the GTP cyclohydrolase I family. As to quaternary structure, toroid-shaped homodecamer, composed of two pentamers of five dimers.

The enzyme catalyses GTP + H2O = 7,8-dihydroneopterin 3'-triphosphate + formate + H(+). The protein operates within cofactor biosynthesis; 7,8-dihydroneopterin triphosphate biosynthesis; 7,8-dihydroneopterin triphosphate from GTP: step 1/1. The protein is GTP cyclohydrolase 1 of Listeria innocua serovar 6a (strain ATCC BAA-680 / CLIP 11262).